The primary structure comprises 308 residues: MNVRGRVAPRRVTGRAMSTLLAYLALTKPRVIELLLVTAIPAMLLADRGAIHPLLMLNTLVGGMMAATGANTLNCVADADIDKVMKRTARRPLAREAVPTRNALALGLTLTVISFFWLWCATNLLAGVLALVTVAFYVFVYTLWLKRRTSQNVVWGGAAGCMPVMIGWSAITGTIAWPALAMFAIIFFWTPPHTWALAMRYKQDYQVAGVPMLPAVATERQVTKQILIYTWLTVAATLVLALATSWLYGAVALVAGGWFLTMAHQLYAGVRAGEPVRPLRLFLQSNNYLAVVFCALAVDSVIALPTLH.

The next 8 helical transmembrane spans lie at 20-40 (LLAYLALTKPRVIELLLVTAI), 50-70 (AIHPLLMLNTLVGGMMAATGA), 102-122 (NALALGLTLTVISFFWLWCAT), 124-144 (LLAGVLALVTVAFYVFVYTLW), 149-169 (TSQNVVWGGAAGCMPVMIGWS), 170-190 (AITGTIAWPALAMFAIIFFWT), 227-249 (LIYTWLTVAATLVLALATSWLYG), and 288-308 (YLAVVFCALAVDSVIALPTLH).

It belongs to the UbiA prenyltransferase family. Protoheme IX farnesyltransferase subfamily.

It localises to the cell membrane. It carries out the reaction heme b + (2E,6E)-farnesyl diphosphate + H2O = Fe(II)-heme o + diphosphate. It participates in porphyrin-containing compound metabolism; heme O biosynthesis; heme O from protoheme: step 1/1. Its function is as follows. Converts heme B (protoheme IX) to heme O by substitution of the vinyl group on carbon 2 of heme B porphyrin ring with a hydroxyethyl farnesyl side group. The protein is Protoheme IX farnesyltransferase of Mycobacterium bovis (strain BCG / Pasteur 1173P2).